Here is a 217-residue protein sequence, read N- to C-terminus: GTPase IMAP family member GIMD1 (217 aa).

The region spanning 6 to 217 (KMIINLAVFG…ENHFQVLSLA (212 aa)) is the AIG1-type G domain. GTP-binding positions include 15–23 (GRTQSGKSS), Ser36, and 148–150 (HAE).

Belongs to the TRAFAC class TrmE-Era-EngA-EngB-Septin-like GTPase superfamily. AIG1/Toc34/Toc159-like paraseptin GTPase family. IAN subfamily.

The protein is GTPase IMAP family member GIMD1 (Gimd1) of Mus musculus (Mouse).